Consider the following 387-residue polypeptide: Zinc finger protein neuro-d4 (387 aa).

Residues Lys-106, Lys-129, and Lys-133 each participate in a glycyl lysine isopeptide (Lys-Gly) (interchain with G-Cter in SUMO2) cross-link. Residues 195-218 form a C2H2-type zinc finger; it reads YVCDICGKRYKNRPGLSYHYTHTH. PHD-type zinc fingers lie at residues 271 to 328 and 325 to 375; these read NGYC…CKSC and CKSC…CLRH. Zn(2+) contacts are provided by Cys-274, Cys-277, Cys-293, Cys-296, His-301, Cys-304, Cys-322, Cys-325, Cys-328, Cys-331, Cys-343, Cys-346, His-351, Cys-354, Cys-369, and Cys-372.

Belongs to the requiem/DPF family. In terms of assembly, component of neuron-specific chromatin remodeling complex (nBAF complex) composed of at least, ARID1A/BAF250A or ARID1B/BAF250B, SMARCD1/BAF60A, SMARCD3/BAF60C, SMARCA2/BRM/BAF190B, SMARCA4/BRG1/BAF190A, SMARCB1/BAF47, SMARCC1/BAF155, SMARCE1/BAF57, SMARCC2/BAF170, DPF1/BAF45B, DPF3/BAF45C, ACTL6B/BAF53B and actin.

The protein resides in the cytoplasm. It localises to the nucleus. Its function is as follows. May have an important role in developing neurons by participating in regulation of cell survival, possibly as a neurospecific transcription factor. Belongs to the neuron-specific chromatin remodeling complex (nBAF complex). During neural development a switch from a stem/progenitor to a postmitotic chromatin remodeling mechanism occurs as neurons exit the cell cycle and become committed to their adult state. The transition from proliferating neural stem/progenitor cells to postmitotic neurons requires a switch in subunit composition of the npBAF and nBAF complexes. As neural progenitors exit mitosis and differentiate into neurons, npBAF complexes which contain ACTL6A/BAF53A and PHF10/BAF45A, are exchanged for homologous alternative ACTL6B/BAF53B and DPF1/BAF45B or DPF3/BAF45C subunits in neuron-specific complexes (nBAF). The npBAF complex is essential for the self-renewal/proliferative capacity of the multipotent neural stem cells. The nBAF complex along with CREST plays a role regulating the activity of genes essential for dendrite growth. The sequence is that of Zinc finger protein neuro-d4 from Homo sapiens (Human).